A 380-amino-acid polypeptide reads, in one-letter code: Alcohol dehydrogenase 3 (380 aa).

C48, T50, H70, C100, C103, C106, C114, and C178 together coordinate Zn(2+). An alcohol is bound by residues T50 and H70. NAD(+) is bound at residue T50. NAD(+) is bound by residues 203–208, D227, R232, T273, V296, 296–298, F323, and R373; these read GLGAVG and VGV.

Belongs to the zinc-containing alcohol dehydrogenase family. Homodimer. Homotetramer. It depends on Zn(2+) as a cofactor.

Its subcellular location is the cytoplasm. The enzyme catalyses a primary alcohol + NAD(+) = an aldehyde + NADH + H(+). It catalyses the reaction a secondary alcohol + NAD(+) = a ketone + NADH + H(+). In Solanum tuberosum (Potato), this protein is Alcohol dehydrogenase 3 (ADH3).